The chain runs to 213 residues: Adenylate kinase (213 aa).

10 to 15 is an ATP binding site; it reads GAGKGT. Positions 30–59 are NMP; it reads STGDMFRAAMANQTEMGVLAKSYIDKGDLV. Residues Thr31, Arg36, 57–59, 86–89, and Gln93 each bind AMP; these read DLV and GYPR. The tract at residues 127-160 is LID; it reads GRIINKKTGETFHKIFNPPVGDYKEEDFYQREDD. Residues Arg128 and 137–138 each bind ATP; that span reads TF. Residues Arg157 and Arg168 each coordinate AMP. Lys196 serves as a coordination point for ATP.

The protein belongs to the adenylate kinase family. In terms of assembly, monomer.

It localises to the cytoplasm. It catalyses the reaction AMP + ATP = 2 ADP. It functions in the pathway purine metabolism; AMP biosynthesis via salvage pathway; AMP from ADP: step 1/1. Its function is as follows. Catalyzes the reversible transfer of the terminal phosphate group between ATP and AMP. Plays an important role in cellular energy homeostasis and in adenine nucleotide metabolism. The polypeptide is Adenylate kinase (Streptococcus equi subsp. zooepidemicus (strain H70)).